The sequence spans 212 residues: Putative tyrosine-protein phosphatase R622 (212 aa).

The Tyrosine-protein phosphatase domain occupies 9 to 191 (KISQVTNNIF…LQGYQSKKEN (183 aa)). The active-site Phosphocysteine intermediate is Cys-135.

It belongs to the protein-tyrosine phosphatase family. Non-receptor class dual specificity subfamily.

The enzyme catalyses O-phospho-L-tyrosyl-[protein] + H2O = L-tyrosyl-[protein] + phosphate. The sequence is that of Putative tyrosine-protein phosphatase R622 from Acanthamoeba polyphaga mimivirus (APMV).